A 589-amino-acid chain; its full sequence is Kelch-like protein 25 (589 aa).

The BTB domain occupies 46–114; it reads TDMTLWAGNR…AYSSKIIINE (69 aa). The BACK domain occupies 149-250; that stretch reads CLGMMILSDA…LPSELLKEAV (102 aa). Kelch repeat units follow at residues 296–340, 341–388, 389–444, 446–492, 494–538, and 539–585; these read TLLI…AIGC, KVYI…ELDN, CLYV…SAKL, LFVF…VLGS, IFIM…ASGN, and KVYV…STWK.

In terms of assembly, component of the BCR(KLHL25) E3 ubiquitin ligase complex, at least composed of cul3, klhl25 and rbx1.

The protein operates within protein modification; protein ubiquitination. Substrate-specific adapter of a BCR (BTB-CUL3-RBX1) E3 ubiquitin ligase complex involved in various processes, such as translation homeostasis and lipid synthesis. The BCR(KLHL25) ubiquitin ligase complex acts by mediating ubiquitination of hypophosphorylated eif4ebp1 (4E-BP1): ubiquitination and subsequent degradation of hypophosphorylated EIF4EBP1 (4E-BP1) probably serves as a homeostatic mechanism to maintain translation and prevent eIF4E inhibition when eIF4E levels are low. The BCR(KLHL25) complex also acts as a regulator of lipid synthesis by mediating ubiquitination and degradation of ACLY, thereby inhibiting lipid synthesis. The polypeptide is Kelch-like protein 25 (Xenopus laevis (African clawed frog)).